Reading from the N-terminus, the 337-residue chain is uncharacterized protein (337 aa).

29-36 (GPKSSGKS) serves as a coordination point for ATP.

Belongs to the archaeal ATPase family.

This is an uncharacterized protein from Methanocaldococcus jannaschii (strain ATCC 43067 / DSM 2661 / JAL-1 / JCM 10045 / NBRC 100440) (Methanococcus jannaschii).